The following is a 215-amino-acid chain: Adenylate kinase (215 aa).

10 to 15 (GAGKGT) provides a ligand contact to ATP. Residues 30–59 (STGDMLRAAIKAQTPMGKMAKEFMDAGKLV) are NMP. Residues T31, R36, 57–59 (KLV), 85–88 (GFPR), and Q92 each bind AMP. The LID stretch occupies residues 122-159 (GRRVHPASGRTYHITYNPPKVDDKDNETGDDLIQREDD). ATP contacts are provided by residues R123 and 132-133 (TY). R156 and R167 together coordinate AMP. Q201 lines the ATP pocket.

The protein belongs to the adenylate kinase family. In terms of assembly, monomer.

It localises to the cytoplasm. It carries out the reaction AMP + ATP = 2 ADP. It functions in the pathway purine metabolism; AMP biosynthesis via salvage pathway; AMP from ADP: step 1/1. Its function is as follows. Catalyzes the reversible transfer of the terminal phosphate group between ATP and AMP. Plays an important role in cellular energy homeostasis and in adenine nucleotide metabolism. This is Adenylate kinase from Hydrogenovibrio crunogenus (strain DSM 25203 / XCL-2) (Thiomicrospira crunogena).